The chain runs to 75 residues: Pi-hexatoxin-Hi1a (75 aa).

6 cysteine pairs are disulfide-bonded: Cys3-Cys18, Cys10-Cys23, Cys17-Cys33, Cys40-Cys55, Cys47-Cys60, and Cys54-Cys71. Domain repeat units follow at residues Cys3–Cys33 and Cys40–Cys71. Residues Cys3–Cys71 are 2 X approximate repeats with cysteine pattern C-C-CC-C-C.

The protein belongs to the psalmotoxin-1 family. Double-knot toxin subfamily. As to expression, expressed by the venom gland.

The protein localises to the secreted. Functionally, this toxin potently and selectively inhibits ASIC1a (IC(50)=0.4 nM on rASIC1a and IC(50)=0.52 nM on hASIC1a), an isoform of the gene ASIC1. It incompletely inhibits ASIC1a activation in a pH-independent and slowly reversible manner (Tau(off)=14.2 minutes for rASIC1a and 31.8 minutes for hASIC1a). This toxin acts by binding to and stabilizing the closed state of the channel, thereby impeding the transition into a conducting state. This toxin may bind to the acidic pocket of ASIC1a, since mutation of a key residue of this pocket (Arg-350) abolishes the ability of the toxin to inhibit ASIC1a. In addition, it shows antiparasitic activities, since it moderately inhibits the larval development of the major pathogenic nematode of ruminants (H.contortus, IC(50)=22.9 uM). In vivo, this toxin protects the brain from neuronal injury when administered up to 8 hours after stroke onset. This is Pi-hexatoxin-Hi1a from Hadronyche infensa (Fraser island funnel-web spider).